Reading from the N-terminus, the 492-residue chain is Protein nucleotidyltransferase YdiU (492 aa).

Gly91, Gly93, Arg94, Lys114, Asp126, Gly127, Arg177, and Arg184 together coordinate ATP. Catalysis depends on Asp253, which acts as the Proton acceptor. Mg(2+) contacts are provided by Asn254 and Asp263. Residue Asp263 coordinates ATP.

This sequence belongs to the SELO family. Mg(2+) serves as cofactor. The cofactor is Mn(2+).

The catalysed reaction is L-seryl-[protein] + ATP = 3-O-(5'-adenylyl)-L-seryl-[protein] + diphosphate. It carries out the reaction L-threonyl-[protein] + ATP = 3-O-(5'-adenylyl)-L-threonyl-[protein] + diphosphate. The enzyme catalyses L-tyrosyl-[protein] + ATP = O-(5'-adenylyl)-L-tyrosyl-[protein] + diphosphate. It catalyses the reaction L-histidyl-[protein] + UTP = N(tele)-(5'-uridylyl)-L-histidyl-[protein] + diphosphate. The catalysed reaction is L-seryl-[protein] + UTP = O-(5'-uridylyl)-L-seryl-[protein] + diphosphate. It carries out the reaction L-tyrosyl-[protein] + UTP = O-(5'-uridylyl)-L-tyrosyl-[protein] + diphosphate. In terms of biological role, nucleotidyltransferase involved in the post-translational modification of proteins. It can catalyze the addition of adenosine monophosphate (AMP) or uridine monophosphate (UMP) to a protein, resulting in modifications known as AMPylation and UMPylation. The polypeptide is Protein nucleotidyltransferase YdiU (Maridesulfovibrio salexigens (strain ATCC 14822 / DSM 2638 / NCIMB 8403 / VKM B-1763) (Desulfovibrio salexigens)).